Here is a 722-residue protein sequence, read N- to C-terminus: Polyribonucleotide nucleotidyltransferase (722 aa).

Mg(2+) is bound by residues D487 and D493. The region spanning 554 to 613 (PRIETFKIPTDKIREVIGTGGKVIREIVEKTGAKVNIEDDGTVKVASSDGESIKAAIKWI) is the KH domain. An S1 motif domain is found at 623-691 (GEIYEGTVVK…DRGKTRLSMK (69 aa)). A disordered region spans residues 697-722 (TGEDLEAKQKAEAKAEGEAPAQAAGE). Basic and acidic residues predominate over residues 701 to 713 (LEAKQKAEAKAEG).

It belongs to the polyribonucleotide nucleotidyltransferase family. Mg(2+) is required as a cofactor.

It localises to the cytoplasm. The catalysed reaction is RNA(n+1) + phosphate = RNA(n) + a ribonucleoside 5'-diphosphate. Involved in mRNA degradation. Catalyzes the phosphorolysis of single-stranded polyribonucleotides processively in the 3'- to 5'-direction. This is Polyribonucleotide nucleotidyltransferase from Rhodopseudomonas palustris (strain ATCC BAA-98 / CGA009).